A 201-amino-acid chain; its full sequence is Lipopolysaccharide core heptose(II)-phosphate phosphatase (201 aa).

A signal peptide spans 1 to 35 (MLAFTLRFIKNKRYLATLAGALVIIAGLTSQHAWS).

It belongs to the phosphoglycerate mutase family. Ais subfamily.

Its subcellular location is the periplasm. The protein operates within bacterial outer membrane biogenesis; lipopolysaccharide metabolism. Catalyzes the dephosphorylation of heptose(II) of the outer membrane lipopolysaccharide core. The polypeptide is Lipopolysaccharide core heptose(II)-phosphate phosphatase (Salmonella schwarzengrund (strain CVM19633)).